Here is a 642-residue protein sequence, read N- to C-terminus: uncharacterized protein (642 aa).

The Cytoplasmic portion of the chain corresponds to 1-15 (MVHITLGQAIWVSVK). The helical transmembrane segment at 16-36 (PIIKIYLIIGVGFLMAKMGIL) threads the bilayer. Over 37 to 42 (TVEATR) the chain is Extracellular. The helical transmembrane segment at 43 to 63 (IISDIVLTVLLPSLSFNKIVA) threads the bilayer. The Cytoplasmic segment spans residues 64–73 (NIEDKDIKSV). Residues 74–94 (GIICLSALLIFGSGFFFAYVV) form a helical membrane-spanning segment. Topologically, residues 95-104 (RLFLPVPKQW) are extracellular. The helical transmembrane segment at 105–125 (YGGILAGGMFPNISDLPIAYL) threads the bilayer. Topologically, residues 126 to 142 (QSMDQGLVFSEEEGNKG) are cytoplasmic. Residues 143 to 163 (VANVIIFLTMFLICIFNLGGF) traverse the membrane as a helical segment. Topologically, residues 164 to 460 (RLIESDFEYN…FLKNCLRPCS (297 aa)) are extracellular. 2 disordered regions span residues 183-206 (ETTK…RFFS) and 227-324 (GTKG…SQPR). Composition is skewed to polar residues over residues 240–260 (RRST…NSKI) and 272–312 (IACT…SSID). A helical transmembrane segment spans residues 461–481 (MAVIIALTVAFIPWVKALFVT). Topologically, residues 482–499 (TANTPHISQAPDNAPPLS) are cytoplasmic. A helical membrane pass occupies residues 500-520 (FFMDFTGYVGAACVPFGLILL). Residues 521-538 (GATLGRLKIGNLYPGFWK) lie on the Extracellular side of the membrane. Residues 539–559 (AAVTLVILRQCVMPIFGVLWC) form a helical membrane-spanning segment. At 560 to 574 (DRLVKAGWVNWQDDR) the chain is on the cytoplasmic side. The chain crosses the membrane as a helical span at residues 575–595 (MLLFVIAISWNLPTMTTLIYF). The Extracellular portion of the chain corresponds to 596-614 (TASFTPPETTAPIQMECVS). A helical membrane pass occupies residues 615 to 635 (FFLMLQYPLMVVSLPFLVSYF). At 636 to 642 (LKVQMNL) the chain is on the cytoplasmic side.

This sequence belongs to the auxin efflux carrier (TC 2.A.69) family.

It is found in the membrane. This is an uncharacterized protein from Saccharomyces cerevisiae (strain ATCC 204508 / S288c) (Baker's yeast).